A 399-amino-acid polypeptide reads, in one-letter code: Elongation factor Tu (399 aa).

Residues K10 to E204 enclose the tr-type G domain. The G1 stretch occupies residues G19–T26. G19–T26 is a binding site for GTP. T26 contributes to the Mg(2+) binding site. The interval G60 to N64 is G2. The G3 stretch occupies residues D81–G84. Residues D81 to H85 and N136 to D139 each bind GTP. A G4 region spans residues N136–D139. The interval S174 to L176 is G5.

The protein belongs to the TRAFAC class translation factor GTPase superfamily. Classic translation factor GTPase family. EF-Tu/EF-1A subfamily. As to quaternary structure, monomer.

The protein resides in the cytoplasm. The enzyme catalyses GTP + H2O = GDP + phosphate + H(+). GTP hydrolase that promotes the GTP-dependent binding of aminoacyl-tRNA to the A-site of ribosomes during protein biosynthesis. The chain is Elongation factor Tu from Synechococcus sp. (strain CC9311).